Consider the following 222-residue polypeptide: Transmembrane protein 114 (222 aa).

The chain crosses the membrane as a helical span at residues 7-27 (ALAGAAALSGALSFVLLAAAI). N-linked (GlcNAc...) asparagine glycans are attached at residues N54 and N88. 3 helical membrane-spanning segments follow: residues 105–125 (FVIL…TGFL), 133–153 (LLLL…LTGI), and 188–208 (LALG…FLAA).

Its subcellular location is the cell junction. The protein resides in the tight junction. The protein localises to the lateral cell membrane. It is found in the apical cell membrane. The polypeptide is Transmembrane protein 114 (Mus musculus (Mouse)).